The primary structure comprises 103 residues: Large ribosomal subunit protein uL24 (103 aa).

Belongs to the universal ribosomal protein uL24 family. Part of the 50S ribosomal subunit.

Its function is as follows. One of two assembly initiator proteins, it binds directly to the 5'-end of the 23S rRNA, where it nucleates assembly of the 50S subunit. One of the proteins that surrounds the polypeptide exit tunnel on the outside of the subunit. This is Large ribosomal subunit protein uL24 from Roseobacter denitrificans (strain ATCC 33942 / OCh 114) (Erythrobacter sp. (strain OCh 114)).